The chain runs to 226 residues: Thiopurine S-methyltransferase (226 aa).

The S-adenosyl-L-methionine site is built by Trp10, Leu47, Glu68, and Arg130.

Belongs to the class I-like SAM-binding methyltransferase superfamily. TPMT family.

Its subcellular location is the cytoplasm. It catalyses the reaction S-adenosyl-L-methionine + a thiopurine = S-adenosyl-L-homocysteine + a thiopurine S-methylether.. The polypeptide is Thiopurine S-methyltransferase (Shewanella sediminis (strain HAW-EB3)).